The primary structure comprises 709 residues: Homeobox-leucine zipper protein TF1 (709 aa).

A DNA-binding region (homeobox) is located at residues 66–125 (RKRRLQRLTGKQSEVLEGFFSICGHPDDGQKRHLSETTGLGLDQVKFWFQNKRTQVKTMC). A coiled-coil region spans residues 166 to 187 (NQLAVEMERLMGQSEWLQQEIA). Positions 212–441 (GQHDQQMIAE…MARQSARMRD (230 aa)) constitute an START domain.

Belongs to the HD-ZIP homeobox family. Class IV subfamily.

It is found in the nucleus. Its function is as follows. Probable transcription factor. In Oryza sativa subsp. japonica (Rice), this protein is Homeobox-leucine zipper protein TF1 (TF1).